The chain runs to 60 residues: UPF0434 protein Ssed_2824 (60 aa).

The protein belongs to the UPF0434 family.

The polypeptide is UPF0434 protein Ssed_2824 (Shewanella sediminis (strain HAW-EB3)).